We begin with the raw amino-acid sequence, 363 residues long: Putative aryl-alcohol dehydrogenase AAD3 (363 aa).

It belongs to the aldo/keto reductase family. Aldo/keto reductase 2 subfamily.

The polypeptide is Putative aryl-alcohol dehydrogenase AAD3 (AAD3) (Saccharomyces cerevisiae (strain ATCC 204508 / S288c) (Baker's yeast)).